The following is a 141-amino-acid chain: Hemoglobin subunit alpha (141 aa).

The Globin domain occupies 1–141 (VLSEEDKSHV…VSAMLTSKYR (141 aa)). Residue histidine 58 coordinates O2. Residue histidine 87 participates in heme b binding.

The protein belongs to the globin family. Heterotetramer of two alpha chains and two beta chains. As to expression, red blood cells.

Its function is as follows. Involved in oxygen transport from the lung to the various peripheral tissues. This is Hemoglobin subunit alpha (HBA) from Caiman crocodilus (Spectacled caiman).